A 249-amino-acid polypeptide reads, in one-letter code: NAD-dependent protein deacylase 2 (249 aa).

The region spanning 1-240 (MNVADLLASS…PRLVEEVKRR (240 aa)) is the Deacetylase sirtuin-type domain. Position 18-37 (18-37 (GAGISAESGVPTFRGPGGLW)) interacts with NAD(+). Substrate-binding residues include tyrosine 62 and arginine 65. 96–99 (QNVD) is an NAD(+) binding site. The Proton acceptor role is filled by histidine 114. Zn(2+)-binding residues include cysteine 122, cysteine 125, cysteine 142, and cysteine 145. NAD(+) is bound by residues 182-184 (GTS), 208-210 (NVE), and alanine 226.

Belongs to the sirtuin family. Class III subfamily. Zn(2+) serves as cofactor.

Its subcellular location is the cytoplasm. It catalyses the reaction N(6)-acetyl-L-lysyl-[protein] + NAD(+) + H2O = 2''-O-acetyl-ADP-D-ribose + nicotinamide + L-lysyl-[protein]. The catalysed reaction is N(6)-succinyl-L-lysyl-[protein] + NAD(+) + H2O = 2''-O-succinyl-ADP-D-ribose + nicotinamide + L-lysyl-[protein]. Functionally, NAD-dependent lysine deacetylase and desuccinylase that specifically removes acetyl and succinyl groups on target proteins. Modulates the activities of several proteins which are inactive in their acylated form. Deacetylates the N-terminal lysine residue of Alba, the major archaeal chromatin protein and that, in turn, increases Alba's DNA binding affinity, thereby repressing transcription. This Pyrobaculum aerophilum (strain ATCC 51768 / DSM 7523 / JCM 9630 / CIP 104966 / NBRC 100827 / IM2) protein is NAD-dependent protein deacylase 2.